We begin with the raw amino-acid sequence, 403 residues long: Ribosomal RNA large subunit methyltransferase I (403 aa).

Residues 9 to 88 (YPRLVLSKGR…ESIDIAFFTR (80 aa)) form the PUA domain.

This sequence belongs to the methyltransferase superfamily. RlmI family.

The protein localises to the cytoplasm. The enzyme catalyses cytidine(1962) in 23S rRNA + S-adenosyl-L-methionine = 5-methylcytidine(1962) in 23S rRNA + S-adenosyl-L-homocysteine + H(+). In terms of biological role, specifically methylates the cytosine at position 1962 (m5C1962) of 23S rRNA. The protein is Ribosomal RNA large subunit methyltransferase I of Salmonella typhi.